We begin with the raw amino-acid sequence, 312 residues long: Borealin-2 (312 aa).

The segment covering M1–R10 has biased composition (basic residues). Residues M1–Q26 are disordered. A compositionally biased stretch (basic and acidic residues) spans R11–Q26.

Belongs to the borealin family. In terms of assembly, component of the CPC complex.

The protein localises to the nucleus. Its subcellular location is the chromosome. It localises to the centromere. Its function is as follows. Component of the chromosomal passenger complex (CPC), a complex that acts as a key regulator of mitosis. The CPC complex has essential functions at the centromere in ensuring correct chromosome alignment and segregation and is required for chromatin-induced microtubule stabilization and spindle assembly. The chain is Borealin-2 from Gallus gallus (Chicken).